The following is a 196-amino-acid chain: Signal peptidase complex catalytic subunit SEC11 (196 aa).

Topologically, residues 1-14 are cytoplasmic; the sequence is MLSSLSPYMANPRQ. The helical; Signal-anchor for type II membrane protein transmembrane segment at 15 to 33 threads the bilayer; sequence TFTQVLNFALVLSTAFMLW. Topologically, residues 34-196 are lumenal; it reads KGLSVYTNSA…MGLMVILQRE (163 aa). Active-site charge relay system residues include Ser53 and His92. Residues 101–133 form a disordered region; sequence VPGKDKTKKGGKQGVEASPSSLESQKLLTKGDN. Residues 118–133 are compositionally biased toward polar residues; that stretch reads SPSSLESQKLLTKGDN. Residue Asn134 is glycosylated (N-linked (GlcNAc...) asparagine). The active-site Charge relay system is Asp138. The C-terminal short (CTS) helix stretch occupies residues 182 to 193; sequence VLLGFMGLMVIL.

This sequence belongs to the peptidase S26B family. Component of the signal peptidase complex (SPC) composed of a catalytic subunit SEC11 and three accessory subunits SPC1, SPC2 and SPC3. The complex induces a local thinning of the ER membrane which is used to measure the length of the signal peptide (SP) h-region of protein substrates. This ensures the selectivity of the complex towards h-regions shorter than 18-20 amino acids. SPC associates with the translocon complex.

It localises to the endoplasmic reticulum membrane. The catalysed reaction is Cleavage of hydrophobic, N-terminal signal or leader sequences from secreted and periplasmic proteins.. Catalytic component of the signal peptidase complex (SPC) which catalyzes the cleavage of N-terminal signal sequences from nascent proteins as they are translocated into the lumen of the endoplasmic reticulum. Specifically cleaves N-terminal signal peptides that contain a hydrophobic alpha-helix (h-region) shorter than 18-20 amino acids. The chain is Signal peptidase complex catalytic subunit SEC11 (SEC11) from Ajellomyces dermatitidis (strain ER-3 / ATCC MYA-2586) (Blastomyces dermatitidis).